A 628-amino-acid chain; its full sequence is DNA-directed RNA polymerase subunit beta' (628 aa).

Residues Cys-70, Cys-72, Cys-85, and Cys-88 each contribute to the Zn(2+) site. Residues Asp-472, Asp-474, and Asp-476 each contribute to the Mg(2+) site.

This sequence belongs to the RNA polymerase beta' chain family. RpoC1 subfamily. In terms of assembly, in plastids the minimal PEP RNA polymerase catalytic core is composed of four subunits: alpha, beta, beta', and beta''. When a (nuclear-encoded) sigma factor is associated with the core the holoenzyme is formed, which can initiate transcription. Mg(2+) is required as a cofactor. Zn(2+) serves as cofactor.

The protein resides in the plastid. The protein localises to the chloroplast. It carries out the reaction RNA(n) + a ribonucleoside 5'-triphosphate = RNA(n+1) + diphosphate. DNA-dependent RNA polymerase catalyzes the transcription of DNA into RNA using the four ribonucleoside triphosphates as substrates. The polypeptide is DNA-directed RNA polymerase subunit beta' (Gracilaria tenuistipitata var. liui (Red alga)).